Reading from the N-terminus, the 219-residue chain is NADH-quinone oxidoreductase subunit C (219 aa).

Belongs to the complex I 30 kDa subunit family. NDH-1 is composed of 14 different subunits. Subunits NuoB, C, D, E, F, and G constitute the peripheral sector of the complex.

Its subcellular location is the cell inner membrane. The enzyme catalyses a quinone + NADH + 5 H(+)(in) = a quinol + NAD(+) + 4 H(+)(out). Functionally, NDH-1 shuttles electrons from NADH, via FMN and iron-sulfur (Fe-S) centers, to quinones in the respiratory chain. The immediate electron acceptor for the enzyme in this species is believed to be ubiquinone. Couples the redox reaction to proton translocation (for every two electrons transferred, four hydrogen ions are translocated across the cytoplasmic membrane), and thus conserves the redox energy in a proton gradient. The polypeptide is NADH-quinone oxidoreductase subunit C (Methylorubrum extorquens (strain PA1) (Methylobacterium extorquens)).